A 345-amino-acid chain; its full sequence is Heat stress transcription factor A-2 (345 aa).

Over residues 17–30 (GSVAASSSVGSSSS) the composition is skewed to low complexity. Positions 17 to 40 (GSVAASSSVGSSSSPRPMEGLNET) are disordered. The DNA-binding element occupies 42-136 (PPPFLTKTYE…LLKNIKRRRN (95 aa)). The interval 150–216 (SCVEVGQYGF…QMMTFLAKAL (67 aa)) is hydrophobic repeat HR-A/B. Positions 231–238 (EKKSLFGL) match the Nuclear localization signal motif. Positions 273–282 (EMLFAAAIDD) match the AHA1 motif. Residue K315 forms a Glycyl lysine isopeptide (Lys-Gly) (interchain with G-Cter in SUMO) linkage. The AHA2 motif lies at 324 to 333 (LDWDSQDLHD). A Nuclear export signal motif is present at residues 334 to 341 (MVDQMGFL).

The protein belongs to the HSF family. Class A subfamily. As to quaternary structure, homotrimer. Interacts with SUMO1. Binds to HSBP. In terms of processing, exhibits temperature-dependent phosphorylation. Sumoylated at Lys-315. Sumoylation represses its function.

It localises to the cytoplasm. It is found in the nucleus. Transcriptional activator that specifically binds DNA sequence 5'-AGAAnnTTCT-3' known as heat shock promoter elements (HSE). Seems to be involved in other environmental stress responses. Activates ascorbate peroxidase 2 (APX2) in addition to several heat shock protein (HSPs). Binds to the promoter of SGIP1 and activates its expression in heat acclimated plants. Involved in the mechanisms necessary for quick response to heat and subsequent heritable transgenerational memory of heat acclimation (global warming) such as early flowering and attenuated immunity; this process includes epigenetic regulation as well as post-transcriptional gene silencing (PTGS). In response to heat, HSFA2 is activated and promotes the expression of REF6 which in turn derepresses HSFA2, thus establishing an inheritable feedback loop able to trigger SGIP1 and subsequent SGIP1-mediated SGS3 degradation; this prevents the biosynthesis of trans-acting siRNA (tasiRNA) and leads to the release of HTT5, which drives early flowering but attenuates immunity. The sequence is that of Heat stress transcription factor A-2 from Arabidopsis thaliana (Mouse-ear cress).